The sequence spans 207 residues: MSLVTTINWEKVDGLVPAVIQDNTSGQVLMLGYMNKEALNKTLETKQVTFWSRTKERLWTKGETSGNVLELKSINLDCDQDTLLVKVNPVGPTCHLGTPTCFDNDAEGKQEQPALVFLHQLEQVLANRKGADPESSYTASLYARGTKRISQKVGEEGVEVALAATSGDKAELVCESADLIYHLIVLLQDQGLSLSDVTEKLQERHNK.

Residues Met-1–Phe-117 are phosphoribosyl-AMP cyclohydrolase. The phosphoribosyl-ATP pyrophosphohydrolase stretch occupies residues Leu-118–Lys-207.

This sequence in the N-terminal section; belongs to the PRA-CH family. The protein in the C-terminal section; belongs to the PRA-PH family.

The protein resides in the cytoplasm. The enzyme catalyses 1-(5-phospho-beta-D-ribosyl)-ATP + H2O = 1-(5-phospho-beta-D-ribosyl)-5'-AMP + diphosphate + H(+). It carries out the reaction 1-(5-phospho-beta-D-ribosyl)-5'-AMP + H2O = 1-(5-phospho-beta-D-ribosyl)-5-[(5-phospho-beta-D-ribosylamino)methylideneamino]imidazole-4-carboxamide. The protein operates within amino-acid biosynthesis; L-histidine biosynthesis; L-histidine from 5-phospho-alpha-D-ribose 1-diphosphate: step 2/9. It participates in amino-acid biosynthesis; L-histidine biosynthesis; L-histidine from 5-phospho-alpha-D-ribose 1-diphosphate: step 3/9. The polypeptide is Histidine biosynthesis bifunctional protein HisIE (Photobacterium profundum (strain SS9)).